A 224-amino-acid chain; its full sequence is Germin-like protein 8-8 (224 aa).

Residues 1-22 form the signal peptide; sequence MASPSFCLLAALLALVSWQAIA. The cysteines at positions 32 and 47 are disulfide-linked. In terms of domain architecture, Cupin type-1 spans 62–212; that stretch reads AMLDTPRKTN…AFQVEKGTID (151 aa). Residue Asn-76 is glycosylated (N-linked (GlcNAc...) asparagine). Residues His-109, His-111, and Glu-116 each coordinate Mn(2+). An N-linked (GlcNAc...) asparagine glycan is attached at Asn-135. Position 157 (His-157) interacts with Mn(2+).

Belongs to the germin family. In terms of assembly, oligomer (believed to be a pentamer but probably hexamer).

It localises to the secreted. The protein localises to the extracellular space. It is found in the apoplast. Its function is as follows. Plays a role in broad-spectrum disease resistance. Probably has no oxalate oxidase activity even if the active site is conserved. The protein is Germin-like protein 8-8 of Oryza sativa subsp. japonica (Rice).